The sequence spans 324 residues: Beta-ketoacyl-[acyl-carrier-protein] synthase III (324 aa).

Active-site residues include C112 and H249. An ACP-binding region spans residues 250-254 (QANDR). Residue N279 is part of the active site.

It belongs to the thiolase-like superfamily. FabH family. Homodimer.

The protein resides in the cytoplasm. It carries out the reaction malonyl-[ACP] + acetyl-CoA + H(+) = 3-oxobutanoyl-[ACP] + CO2 + CoA. The protein operates within lipid metabolism; fatty acid biosynthesis. In terms of biological role, catalyzes the condensation reaction of fatty acid synthesis by the addition to an acyl acceptor of two carbons from malonyl-ACP. Catalyzes the first condensation reaction which initiates fatty acid synthesis and may therefore play a role in governing the total rate of fatty acid production. Possesses both acetoacetyl-ACP synthase and acetyl transacylase activities. Its substrate specificity determines the biosynthesis of branched-chain and/or straight-chain of fatty acids. The polypeptide is Beta-ketoacyl-[acyl-carrier-protein] synthase III (Streptococcus gordonii (strain Challis / ATCC 35105 / BCRC 15272 / CH1 / DL1 / V288)).